The sequence spans 115 residues: Large ribosomal subunit protein bL19 (115 aa).

It belongs to the bacterial ribosomal protein bL19 family. As to quaternary structure, part of the 50S ribosomal subunit.

In terms of biological role, this protein is located at the 30S-50S ribosomal subunit interface and may play a role in the structure and function of the aminoacyl-tRNA binding site. The polypeptide is Large ribosomal subunit protein bL19 (rplS) (Bacillus subtilis (strain 168)).